A 213-amino-acid polypeptide reads, in one-letter code: Penicillin-binding protein activator LpoB (213 aa).

An N-terminal signal peptide occupies residues methionine 1–glycine 19. Cysteine 20 carries the N-palmitoyl cysteine lipid modification. The S-diacylglycerol cysteine moiety is linked to residue cysteine 20. A disordered region spans residues proline 28–histidine 74. The span at proline 36–proline 50 shows a compositional bias: pro residues.

Belongs to the LpoB family. As to quaternary structure, interacts with PBP1b.

The protein resides in the cell outer membrane. Regulator of peptidoglycan synthesis that is essential for the function of penicillin-binding protein 1B (PBP1b). The protein is Penicillin-binding protein activator LpoB of Escherichia coli O157:H7.